Consider the following 242-residue polypeptide: ATP synthase subunit a, chloroplastic (242 aa).

The next 5 helical transmembrane spans lie at 34 to 54, 93 to 113, 132 to 152, 188 to 210, and 222 to 242; these read GQVL…AVLG, VPFI…GAII, INTT…AGLS, LFGN…PLVI, and GSVQ…EALE.

Belongs to the ATPase A chain family. As to quaternary structure, F-type ATPases have 2 components, CF(1) - the catalytic core - and CF(0) - the membrane proton channel. CF(1) has five subunits: alpha(3), beta(3), gamma(1), delta(1), epsilon(1). CF(0) has four main subunits: a, b, b' and c.

It is found in the plastid. The protein resides in the chloroplast thylakoid membrane. Functionally, key component of the proton channel; it plays a direct role in the translocation of protons across the membrane. The polypeptide is ATP synthase subunit a, chloroplastic (Trieres chinensis (Marine centric diatom)).